The chain runs to 373 residues: PqqA peptide cyclase (373 aa).

The Radical SAM core domain maps to 7 to 227 (ILNPVGLLAE…EVYAGVIVID (221 aa)). Residues C21, C25, and C28 each contribute to the [4Fe-4S] cluster site.

This sequence belongs to the radical SAM superfamily. PqqE family. As to quaternary structure, interacts with PqqD. The interaction is necessary for activity of PqqE. It depends on [4Fe-4S] cluster as a cofactor.

It carries out the reaction [PQQ precursor protein] + S-adenosyl-L-methionine = E-Y cross-linked-[PQQ precursor protein] + 5'-deoxyadenosine + L-methionine + H(+). The protein operates within cofactor biosynthesis; pyrroloquinoline quinone biosynthesis. Functionally, catalyzes the cross-linking of a glutamate residue and a tyrosine residue in the PqqA protein as part of the biosynthesis of pyrroloquinoline quinone (PQQ). The polypeptide is PqqA peptide cyclase (Methylocella silvestris (strain DSM 15510 / CIP 108128 / LMG 27833 / NCIMB 13906 / BL2)).